Here is a 282-residue protein sequence, read N- to C-terminus: Bis(5'-nucleosyl)-tetraphosphatase, symmetrical (282 aa).

Belongs to the Ap4A hydrolase family.

The enzyme catalyses P(1),P(4)-bis(5'-adenosyl) tetraphosphate + H2O = 2 ADP + 2 H(+). Functionally, hydrolyzes diadenosine 5',5'''-P1,P4-tetraphosphate to yield ADP. In Escherichia coli O81 (strain ED1a), this protein is Bis(5'-nucleosyl)-tetraphosphatase, symmetrical.